The primary structure comprises 739 residues: Ankyrin repeat and SAM domain-containing protein 6 (739 aa).

8 ANK repeats span residues 1–30 (MGAS…FVDD), 57–86 (LEVR…DARV), 91–120 (TGWS…DPDH), 124–156 (LGNT…RPDD), 158–188 (KKRP…QVDV), 192–221 (DGAS…DVDR), 226–255 (HGWT…DVQL), and 259–290 (NGYT…LVDK). The span at 295–305 (QRGKSALRRRA) shows a compositional bias: basic residues. Disordered regions lie at residues 295 to 320 (QRGK…TGLK) and 449 to 645 (LRDA…ITDE). Polar residues predominate over residues 462–478 (PGRSSAGSDTASISRVV). Low complexity-rich tracts occupy residues 490-506 (GPSP…HSSG) and 582-592 (SSRSKSTSPTL). Pro residues predominate over residues 593–603 (TPSPSPTPAHT). Residues 604–641 (PAPAHTPAHRPTGASADSQGSASTQQRSRSSGGSSSGT) are compositionally biased toward low complexity. Residues 643 to 706 (TDEDELSGIL…LAAISELNAG (64 aa)) enclose the SAM domain.

The protein resides in the cell projection. It is found in the cilium. Required for renal function. This Danio rerio (Zebrafish) protein is Ankyrin repeat and SAM domain-containing protein 6 (anks6).